The primary structure comprises 91 residues: DNA-directed RNA polymerase subunit omega (91 aa).

This sequence belongs to the RNA polymerase subunit omega family. In terms of assembly, the RNAP catalytic core consists of 2 alpha, 1 beta, 1 beta' and 1 omega subunit. When a sigma factor is associated with the core the holoenzyme is formed, which can initiate transcription.

It catalyses the reaction RNA(n) + a ribonucleoside 5'-triphosphate = RNA(n+1) + diphosphate. Functionally, promotes RNA polymerase assembly. Latches the N- and C-terminal regions of the beta' subunit thereby facilitating its interaction with the beta and alpha subunits. The protein is DNA-directed RNA polymerase subunit omega of Sodalis glossinidius (strain morsitans).